A 406-amino-acid chain; its full sequence is Argininosuccinate synthase (406 aa).

Residues 11–19 and alanine 38 contribute to the ATP site; that span reads AYSGGLDTS. Residues tyrosine 91 and serine 96 each coordinate L-citrulline. Glycine 121 is a binding site for ATP. L-aspartate is bound by residues threonine 123, asparagine 127, and aspartate 128. Position 127 (asparagine 127) interacts with L-citrulline. L-citrulline-binding residues include arginine 131, serine 181, serine 190, glutamate 266, and tyrosine 278.

Belongs to the argininosuccinate synthase family. Type 1 subfamily. Homotetramer.

The protein resides in the cytoplasm. The enzyme catalyses L-citrulline + L-aspartate + ATP = 2-(N(omega)-L-arginino)succinate + AMP + diphosphate + H(+). It participates in amino-acid biosynthesis; L-arginine biosynthesis; L-arginine from L-ornithine and carbamoyl phosphate: step 2/3. The chain is Argininosuccinate synthase from Campylobacter jejuni subsp. doylei (strain ATCC BAA-1458 / RM4099 / 269.97).